Consider the following 355-residue polypeptide: Cytoplasmic tRNA 2-thiolation protein 1 (355 aa).

The tract at residues 320 to 341 is disordered; sequence GIGRPRGVNGDHNKETKKPGSV. Basic and acidic residues predominate over residues 328–337; it reads NGDHNKETKK.

Belongs to the TtcA family. CTU1/NCS6/ATPBD3 subfamily.

Its subcellular location is the cytoplasm. It participates in tRNA modification; 5-methoxycarbonylmethyl-2-thiouridine-tRNA biosynthesis. Functionally, plays a central role in 2-thiolation of mcm(5)S(2)U at tRNA wobble positions of tRNA(Lys), tRNA(Glu) and tRNA(Gln). Directly binds tRNAs and probably acts by catalyzing adenylation of tRNAs, an intermediate required for 2-thiolation. It is unclear whether it acts as a sulfurtransferase that transfers sulfur from thiocarboxylated URM1 onto the uridine of tRNAs at wobble position. The polypeptide is Cytoplasmic tRNA 2-thiolation protein 1 (Arabidopsis thaliana (Mouse-ear cress)).